We begin with the raw amino-acid sequence, 347 residues long: High mobility group protein 20A (347 aa).

Composition is skewed to polar residues over residues 1–10 and 40–49; these read MENLMTSSTL and SGATSSTNNP. Disordered stretches follow at residues 1–113 and 179–211; these read MENL…YVRF and FSRK…TEVK. Residues 55–66 are compositionally biased toward low complexity; sequence LSQGQLLQSESS. Over residues 72–82 the composition is skewed to basic and acidic residues; that stretch reads NEQRHEDEQRS. Residues 83–96 show a composition bias toward basic residues; it reads KRGGWSKGRKRKKP. Residues 103–171 constitute a DNA-binding region (HMG box); sequence PKSPLTGYVR…RYMKELEQYQ (69 aa). Ser-105 is modified (phosphoserine). Basic and acidic residues predominate over residues 182-211; that stretch reads KTQDRQKGKSHRQDAARQATHDHEKETEVK. Residues 229 to 273 are a coiled coil; the sequence is SKAREAELRQLRKSNMEFEERNAALQKHVESMRTAVEKLEVDVIQ.

As to quaternary structure, interacts with DTNB. In terms of tissue distribution, ubiquitous.

The protein localises to the nucleus. In terms of biological role, plays a role in neuronal differentiation as chromatin-associated protein. Acts as inhibitor of HMG20B. Overcomes the repressive effects of the neuronal silencer REST and induces the activation of neuronal-specific genes. Involved in the recruitment of the histone methyltransferase KMT2A/MLL1 and consequent increased methylation of histone H3 lysine 4. In Homo sapiens (Human), this protein is High mobility group protein 20A (HMG20A).